We begin with the raw amino-acid sequence, 710 residues long: Polyribonucleotide nucleotidyltransferase (710 aa).

2 residues coordinate Mg(2+): aspartate 489 and aspartate 495. One can recognise a KH domain in the interval 556 to 615 (PKIDTIKIDVDKIKVVIGKGGETIDKIIAETGVKIDIDDEGNVSIYSSDQAAIDRTKEII). Residues 625–693 (GEVYHAKVVR…EKGRVDASMK (69 aa)) form the S1 motif domain. A disordered region spans residues 691–710 (SMKALIPRPPKPEKKEEKHD). The segment covering 700–710 (PKPEKKEEKHD) has biased composition (basic and acidic residues).

This sequence belongs to the polyribonucleotide nucleotidyltransferase family. The cofactor is Mg(2+).

Its subcellular location is the cytoplasm. The enzyme catalyses RNA(n+1) + phosphate = RNA(n) + a ribonucleoside 5'-diphosphate. Involved in mRNA degradation. Catalyzes the phosphorolysis of single-stranded polyribonucleotides processively in the 3'- to 5'-direction. In Streptococcus pyogenes serotype M1, this protein is Polyribonucleotide nucleotidyltransferase.